Reading from the N-terminus, the 322-residue chain is Ribosomal RNA large subunit methyltransferase F (322 aa).

It belongs to the methyltransferase superfamily. METTL16/RlmF family.

It localises to the cytoplasm. It carries out the reaction adenosine(1618) in 23S rRNA + S-adenosyl-L-methionine = N(6)-methyladenosine(1618) in 23S rRNA + S-adenosyl-L-homocysteine + H(+). Functionally, specifically methylates the adenine in position 1618 of 23S rRNA. This chain is Ribosomal RNA large subunit methyltransferase F, found in Cytophaga hutchinsonii (strain ATCC 33406 / DSM 1761 / CIP 103989 / NBRC 15051 / NCIMB 9469 / D465).